A 390-amino-acid polypeptide reads, in one-letter code: Spore development regulator vosA (390 aa).

The region spanning 3-132 (NNTSSDFDLI…ADQGVKLRIR (130 aa)) is the Velvet domain. A compositionally biased stretch (basic and acidic residues) spans 137–149 (TMLKRSTRPDEFH). Disordered stretches follow at residues 137–191 (TMLK…PVKR) and 265–390 (QASA…GTPQ). A compositionally biased stretch (low complexity) spans 165–175 (PPSSSYGGYPP). The short motif at 273–280 (IPDPTGQS) is the Nuclear localization signal element. Polar residues-rich tracts occupy residues 350–364 (QTPQ…SQMV) and 371–390 (SSVT…GTPQ).

It belongs to the velvet family. VosA subfamily. Forms a heterodimeric complex with velB; the formation of the velB-vosA complex is light-dependent. Interacts with velA, velB and velC.

It localises to the nucleus. Component of the velB-VosA heterodimeric complex that plays a dual role in activating genes associated with spore maturation and repressing certain development-associated genes. The complex binds DNA through the DNA-binding domain of vosA that recognizes an 11-nucleotide consensus sequence 5'-CTGGCCGCGGC-3' consisting of two motifs in the promoters of key developmental regulatory genes. The polypeptide is Spore development regulator vosA (Penicillium rubens (strain ATCC 28089 / DSM 1075 / NRRL 1951 / Wisconsin 54-1255) (Penicillium chrysogenum)).